A 373-amino-acid polypeptide reads, in one-letter code: MSEKKINLLDLDRKAMRALFADLGEKPFRADQLMKWIYHFGVSDFEEMTNINKVLRQKLAARCEIVAPEISSYQKSTDGTIKFAIHVGEGQEVETVYIPEDDRATLCVSSQVGCALECTFCSTAQQGFNRNLTVSEIVGQIWRVSHFLGFAKETGERPITNVVMMGMGEPLLNLANVIPAMDIMLDDFGFSLSKRRVTLSTSGVVPALDKLGDALDVALAVSIHAPNDELRDILVPVNKKYPLQEFLAGIRRYIAKSNANRGRVTVEYVMLDHINDSTEQAHELAQLMKDTPCKVNLIPFNPYPGSPYGRSSNSRIDRFSKVLMEYGLTVIVRKTRGDDIDAACGQLAGDIRDRTKRLAKKRMQENQISVTMN.

Glu94 functions as the Proton acceptor in the catalytic mechanism. A Radical SAM core domain is found at 100–339 (EDDRATLCVS…VIVRKTRGDD (240 aa)). A disulfide bond links Cys107 and Cys344. [4Fe-4S] cluster is bound by residues Cys114, Cys118, and Cys121. S-adenosyl-L-methionine contacts are provided by residues 168–169 (GE), Ser200, 222–224 (SIH), and Asn301. Cys344 (S-methylcysteine intermediate) is an active-site residue.

This sequence belongs to the radical SAM superfamily. RlmN family. It depends on [4Fe-4S] cluster as a cofactor.

It is found in the cytoplasm. The enzyme catalyses adenosine(2503) in 23S rRNA + 2 reduced [2Fe-2S]-[ferredoxin] + 2 S-adenosyl-L-methionine = 2-methyladenosine(2503) in 23S rRNA + 5'-deoxyadenosine + L-methionine + 2 oxidized [2Fe-2S]-[ferredoxin] + S-adenosyl-L-homocysteine. The catalysed reaction is adenosine(37) in tRNA + 2 reduced [2Fe-2S]-[ferredoxin] + 2 S-adenosyl-L-methionine = 2-methyladenosine(37) in tRNA + 5'-deoxyadenosine + L-methionine + 2 oxidized [2Fe-2S]-[ferredoxin] + S-adenosyl-L-homocysteine. Functionally, specifically methylates position 2 of adenine 2503 in 23S rRNA and position 2 of adenine 37 in tRNAs. m2A2503 modification seems to play a crucial role in the proofreading step occurring at the peptidyl transferase center and thus would serve to optimize ribosomal fidelity. The protein is Dual-specificity RNA methyltransferase RlmN of Shewanella sp. (strain ANA-3).